Here is a 387-residue protein sequence, read N- to C-terminus: Pepsin II-2/3 (387 aa).

Positions 1–15 are cleaved as a signal peptide; sequence MKWLLLLGLLALSEC. Residues 16–59 constitute a propeptide, activation peptide; the sequence is IVHKVPLVRKKSLRKNLIEKGLLQDYLKTHTPNPATKYFPKETF. Positions 75-384 constitute a Peptidase A1 domain; that stretch reads YFGTISIGTP…DRANNQLGLA (310 aa). The active site involves D93. C106 and C111 form a disulfide bridge. Phosphoserine is present on S129. The cysteines at positions 267 and 271 are disulfide-linked. D276 is a catalytic residue. A disulfide bridge connects residues C310 and C343.

It belongs to the peptidase A1 family.

The protein localises to the secreted. It catalyses the reaction Preferential cleavage: hydrophobic, preferably aromatic, residues in P1 and P1' positions. Cleaves 1-Phe-|-Val-2, 4-Gln-|-His-5, 13-Glu-|-Ala-14, 14-Ala-|-Leu-15, 15-Leu-|-Tyr-16, 16-Tyr-|-Leu-17, 23-Gly-|-Phe-24, 24-Phe-|-Phe-25 and 25-Phe-|-Tyr-26 bonds in the B chain of insulin.. Shows particularly broad specificity; although bonds involving phenylalanine and leucine are preferred, many others are also cleaved to some extent. The protein is Pepsin II-2/3 of Oryctolagus cuniculus (Rabbit).